The primary structure comprises 71 residues: Small ribosomal subunit protein bS18 (71 aa).

Belongs to the bacterial ribosomal protein bS18 family. Part of the 30S ribosomal subunit. Forms a tight heterodimer with protein bS6.

Binds as a heterodimer with protein bS6 to the central domain of the 16S rRNA, where it helps stabilize the platform of the 30S subunit. This chain is Small ribosomal subunit protein bS18, found in Synechococcus sp. (strain JA-2-3B'a(2-13)) (Cyanobacteria bacterium Yellowstone B-Prime).